Here is a 137-residue protein sequence, read N- to C-terminus: Large ribosomal subunit protein uL16 (137 aa).

The protein belongs to the universal ribosomal protein uL16 family. Part of the 50S ribosomal subunit.

In terms of biological role, binds 23S rRNA and is also seen to make contacts with the A and possibly P site tRNAs. In Magnetococcus marinus (strain ATCC BAA-1437 / JCM 17883 / MC-1), this protein is Large ribosomal subunit protein uL16.